The chain runs to 230 residues: Dephospho-CoA kinase (230 aa).

A DPCK domain is found at 3–206 (LVGLTGGIAS…EPLTWKERLR (204 aa)). 8–15 (GGIASGKS) is a binding site for ATP.

It belongs to the CoaE family.

The enzyme catalyses 3'-dephospho-CoA + ATP = ADP + CoA + H(+). It participates in cofactor biosynthesis; coenzyme A biosynthesis; CoA from (R)-pantothenate: step 5/5. Functionally, catalyzes the phosphorylation of the 3'-hydroxyl group of dephosphocoenzyme A to form coenzyme A. This chain is Dephospho-CoA kinase, found in Oryza sativa subsp. japonica (Rice).